Here is a 395-residue protein sequence, read N- to C-terminus: Putative pyridoxal phosphate-dependent acyltransferase (395 aa).

110–111 (GF) contributes to the pyridoxal 5'-phosphate binding site. Position 135 (His135) interacts with substrate. Residues Ser185, 210–213 (DDAH), and 240–243 (TLSK) contribute to the pyridoxal 5'-phosphate site. Position 243 is an N6-(pyridoxal phosphate)lysine (Lys243). Thr357 contacts substrate.

This sequence belongs to the class-II pyridoxal-phosphate-dependent aminotransferase family. Homodimer. Pyridoxal 5'-phosphate serves as cofactor.

This is Putative pyridoxal phosphate-dependent acyltransferase from Staphylococcus aureus (strain Mu50 / ATCC 700699).